A 166-amino-acid chain; its full sequence is Sec-independent protein translocase protein TatB (166 aa).

A helical transmembrane segment spans residues 2–22 (FDGIGFMELLLIGVLGLVVLG). The tract at residues 69–166 (SKGLSNLSPE…DTRSNPKANG (98 aa)) is disordered. Polar residues-rich tracts occupy residues 88–97 (QAAQSVNRPY) and 112–132 (QIHS…SQAN). Low complexity predominate over residues 133 to 153 (PTATVEASPTSASPATPSEPS). Residues 155–166 (GADTRSNPKANG) are compositionally biased toward polar residues.

It belongs to the TatB family. The Tat system comprises two distinct complexes: a TatABC complex, containing multiple copies of TatA, TatB and TatC subunits, and a separate TatA complex, containing only TatA subunits. Substrates initially bind to the TatABC complex, which probably triggers association of the separate TatA complex to form the active translocon.

It localises to the cell inner membrane. Functionally, part of the twin-arginine translocation (Tat) system that transports large folded proteins containing a characteristic twin-arginine motif in their signal peptide across membranes. Together with TatC, TatB is part of a receptor directly interacting with Tat signal peptides. TatB may form an oligomeric binding site that transiently accommodates folded Tat precursor proteins before their translocation. The protein is Sec-independent protein translocase protein TatB of Shewanella baltica (strain OS223).